A 426-amino-acid polypeptide reads, in one-letter code: Serine--tRNA ligase (426 aa).

233 to 235 provides a ligand contact to L-serine; that stretch reads TAE. ATP is bound at residue 264–266; sequence RRE. Glu-287 is an L-serine binding site. 351–354 is a binding site for ATP; that stretch reads EISS. L-serine is bound at residue Ser-386.

Belongs to the class-II aminoacyl-tRNA synthetase family. Type-1 seryl-tRNA synthetase subfamily. In terms of assembly, homodimer. The tRNA molecule binds across the dimer.

It is found in the cytoplasm. It catalyses the reaction tRNA(Ser) + L-serine + ATP = L-seryl-tRNA(Ser) + AMP + diphosphate + H(+). It carries out the reaction tRNA(Sec) + L-serine + ATP = L-seryl-tRNA(Sec) + AMP + diphosphate + H(+). Its pathway is aminoacyl-tRNA biosynthesis; selenocysteinyl-tRNA(Sec) biosynthesis; L-seryl-tRNA(Sec) from L-serine and tRNA(Sec): step 1/1. In terms of biological role, catalyzes the attachment of serine to tRNA(Ser). Is also able to aminoacylate tRNA(Sec) with serine, to form the misacylated tRNA L-seryl-tRNA(Sec), which will be further converted into selenocysteinyl-tRNA(Sec). The sequence is that of Serine--tRNA ligase from Prochlorococcus marinus (strain NATL1A).